Here is a 901-residue protein sequence, read N- to C-terminus: Alpha-actinin-3 (901 aa).

At Met1 the chain carries N-acetylmethionine. An actin-binding region spans residues 1-261; the sequence is MMMVLQPEGL…IMTYVSCFYH (261 aa). Calponin-homology (CH) domains follow at residues 45 to 149 and 158 to 264; these read KQQR…LRFA and TSAK…HAFA. Spectrin repeat units follow at residues 288-398, 408-513, 523-634, and 644-747; these read KLME…WLLS, HLAE…ALER, QLQL…MLQE, and RLRR…EVEN. 2 EF-hand domains span residues 760–795 and 796–831; these read EQLN…MGYD and LGEV…ETAE. Residues Asp773, Asn777, Met779, Asp784, Asp809, and Asn811 each coordinate Ca(2+).

This sequence belongs to the alpha-actinin family. As to quaternary structure, homodimer; antiparallel. Also forms heterodimers with ACTN2. Interacts with MYOZ1.

F-actin cross-linking protein which is thought to anchor actin to a variety of intracellular structures. This is a bundling protein. The sequence is that of Alpha-actinin-3 (ACTN3) from Bos taurus (Bovine).